The primary structure comprises 745 residues: Photosystem I P700 chlorophyll a apoprotein A2 (745 aa).

8 helical membrane passes run 49 to 72 (LFAT…FHIA), 138 to 161 (LYAG…LHLQ), 178 to 202 (LNHH…HVAI), 276 to 294 (MAHH…GHMY), 338 to 361 (LHFQ…QHMY), 377 to 403 (AALY…IFLV), 425 to 447 (AIIS…LYVH), and 528 to 546 (FLVH…LILV). 2 residues coordinate [4Fe-4S] cluster: cysteine 570 and cysteine 579. 2 helical membrane passes run 586 to 607 (AFYL…YWHW) and 654 to 676 (LAVW…MFLI). Histidine 665, methionine 673, and tyrosine 681 together coordinate chlorophyll a. Tryptophan 682 provides a ligand contact to phylloquinone. Residues 718 to 738 (LVGLAHFTVGYVLTYAAFVIA) form a helical membrane-spanning segment.

It belongs to the PsaA/PsaB family. As to quaternary structure, the PsaA/B heterodimer binds the P700 chlorophyll special pair and subsequent electron acceptors. PSI consists of a core antenna complex that captures photons, and an electron transfer chain that converts photonic excitation into a charge separation. The cyanobacterial PSI reaction center is composed of one copy each of PsaA,B,C,D,E,F,I,J,K,L,M and X, and forms trimeric complexes. The cofactor is PSI electron transfer chain: 5 chlorophyll a, 1 chlorophyll a', 2 phylloquinones and 3 4Fe-4S clusters. PSI core antenna: 90 chlorophyll a, 22 carotenoids, 3 phospholipids and 1 galactolipid. P700 is a chlorophyll a/chlorophyll a' dimer, A0 is one or more chlorophyll a, A1 is one or both phylloquinones and FX is a shared 4Fe-4S iron-sulfur center..

It is found in the cellular thylakoid membrane. The enzyme catalyses reduced [plastocyanin] + hnu + oxidized [2Fe-2S]-[ferredoxin] = oxidized [plastocyanin] + reduced [2Fe-2S]-[ferredoxin]. In terms of biological role, psaA and PsaB bind P700, the primary electron donor of photosystem I (PSI), as well as the electron acceptors A0, A1 and FX. PSI is a plastocyanin/cytochrome c6-ferredoxin oxidoreductase, converting photonic excitation into a charge separation, which transfers an electron from the donor P700 chlorophyll pair to the spectroscopically characterized acceptors A0, A1, FX, FA and FB in turn. Oxidized P700 is reduced on the lumenal side of the thylakoid membrane by plastocyanin or cytochrome c6. This chain is Photosystem I P700 chlorophyll a apoprotein A2, found in Synechococcus sp. (strain JA-3-3Ab) (Cyanobacteria bacterium Yellowstone A-Prime).